Here is a 387-residue protein sequence, read N- to C-terminus: Probable nitrate transporter NarT (387 aa).

The next 12 membrane-spanning stretches (helical) occupy residues 14–34, 45–65, 69–89, 97–117, 137–157, 161–181, 211–231, 246–266, 268–288, 294–314, 330–350, and 358–378; these read TLSL…MPFI, ISVI…PFGY, IVGA…PIFL, GMLM…SVGV, GVGN…AGAI, NTVR…FFLG, WYFI…NFLV, GIFI…GDKF, AVQA…ILSL, LFTI…GLIF, GIVS…ITFV, and HLAF…MIHL.

This sequence belongs to the major facilitator superfamily. Nitrate/nitrite porter (TC 2.A.1.8) family.

It localises to the cell membrane. Its function is as follows. Probably required for nitrate uptake under anoxic conditions. Also possibly involved in excretion of nitrite produced by the dissimilatory reduction of nitrate. This is Probable nitrate transporter NarT (narT) from Staphylococcus epidermidis (strain ATCC 35984 / DSM 28319 / BCRC 17069 / CCUG 31568 / BM 3577 / RP62A).